Consider the following 328-residue polypeptide: Malate dehydrogenase (328 aa).

Position 11–17 (11–17 (GAAGQIG)) interacts with NAD(+). Arg-92 and Arg-98 together coordinate substrate. NAD(+) contacts are provided by residues Asn-105, Gln-112, and 129–131 (VGN). Substrate-binding residues include Asn-131 and Arg-162. His-187 functions as the Proton acceptor in the catalytic mechanism.

This sequence belongs to the LDH/MDH superfamily. MDH type 2 family.

The catalysed reaction is (S)-malate + NAD(+) = oxaloacetate + NADH + H(+). Functionally, catalyzes the reversible oxidation of malate to oxaloacetate. The chain is Malate dehydrogenase from Coxiella burnetii (strain CbuK_Q154) (Coxiella burnetii (strain Q154)).